The following is a 379-amino-acid chain: Chaperone protein DnaJ (379 aa).

In terms of domain architecture, J spans 5 to 69 (EYYERLGVDK…QKRAAYDQYG (65 aa)). The CR-type zinc finger occupies 141–223 (GVEKQVKYNR…CHGSGHEKVA (83 aa)). Residues Cys154, Cys157, Cys171, Cys174, Cys197, Cys200, Cys211, and Cys214 each coordinate Zn(2+). CXXCXGXG motif repeat units follow at residues 154–161 (CHTCDGSG), 171–178 (CHKCGGRG), 197–204 (CDVCHGTG), and 211–218 (CTTCHGSG).

This sequence belongs to the DnaJ family. As to quaternary structure, homodimer. Zn(2+) serves as cofactor.

It is found in the cytoplasm. Its function is as follows. Participates actively in the response to hyperosmotic and heat shock by preventing the aggregation of stress-denatured proteins and by disaggregating proteins, also in an autonomous, DnaK-independent fashion. Unfolded proteins bind initially to DnaJ; upon interaction with the DnaJ-bound protein, DnaK hydrolyzes its bound ATP, resulting in the formation of a stable complex. GrpE releases ADP from DnaK; ATP binding to DnaK triggers the release of the substrate protein, thus completing the reaction cycle. Several rounds of ATP-dependent interactions between DnaJ, DnaK and GrpE are required for fully efficient folding. Also involved, together with DnaK and GrpE, in the DNA replication of plasmids through activation of initiation proteins. The protein is Chaperone protein DnaJ of Lactococcus lactis subsp. cremoris (strain SK11).